The primary structure comprises 827 residues: Periplasmic nitrate reductase (827 aa).

The segment at residues 1 to 34 (MSLTRRDFIKANAVAATAAAAGIATPAIAQPAKA) is a signal peptide (tat-type signal). The 57-residue stretch at 36–92 (IRWDKGVCRFCGTGCAVLVGVQDGRVVATQGDPDSPVNRGLNCIKGYFLSKIMYGED) folds into the 4Fe-4S Mo/W bis-MGD-type domain. [4Fe-4S] cluster-binding residues include Cys-43, Cys-46, Cys-50, and Cys-78. Mo-bis(molybdopterin guanine dinucleotide) contacts are provided by residues Lys-80, Gln-148, Asn-173, Cys-177, 210–217 (WGSNMAEM), 241–245 (STFEH), 260–262 (QTD), Met-371, Gln-375, Asn-481, 507–508 (SD), Lys-530, Asp-557, and 717–726 (TGRVLEHWHS). Phe-793 contacts substrate. The Mo-bis(molybdopterin guanine dinucleotide) site is built by Asn-801 and Lys-818.

The protein belongs to the prokaryotic molybdopterin-containing oxidoreductase family. NasA/NapA/NarB subfamily. In terms of assembly, component of the periplasmic nitrate reductase NapAB complex composed of NapA and NapB. It depends on [4Fe-4S] cluster as a cofactor. Mo-bis(molybdopterin guanine dinucleotide) is required as a cofactor. In terms of processing, predicted to be exported by the Tat system. The position of the signal peptide cleavage has not been experimentally proven.

It localises to the periplasm. The enzyme catalyses 2 Fe(II)-[cytochrome] + nitrate + 2 H(+) = 2 Fe(III)-[cytochrome] + nitrite + H2O. Its function is as follows. Catalytic subunit of the periplasmic nitrate reductase complex NapAB. Receives electrons from NapB and catalyzes the reduction of nitrate to nitrite. This chain is Periplasmic nitrate reductase, found in Paramagnetospirillum magneticum (strain ATCC 700264 / AMB-1) (Magnetospirillum magneticum).